The primary structure comprises 613 residues: DBH-like monooxygenase protein 1 (613 aa).

The N-terminal stretch at 1-19 (MCCWPLLLLWGLLPGTAAG) is a signal peptide. Residues 20 to 592 (GSGRTYPHRT…TSSSSSLHRD (573 aa)) are Lumenal-facing. In terms of domain architecture, DOMON spans 35–148 (GKYWLGWSQR…STVRVIWAYH (114 aa)). N-linked (GlcNAc...) asparagine glycosylation is present at asparagine 114. Tyrosine 203 is an active-site residue. 2 cysteine pairs are disulfide-bonded: cysteine 205/cysteine 257 and cysteine 242/cysteine 269. Positions 235 and 236 each coordinate Cu cation. The N-linked (GlcNAc...) asparagine glycan is linked to asparagine 247. Residues histidine 307, histidine 389, histidine 391, and methionine 464 each contribute to the Cu cation site. Disulfide bonds link cysteine 364–cysteine 480, cysteine 368–cysteine 550, and cysteine 443–cysteine 465. The active site involves histidine 389. N-linked (GlcNAc...) asparagine glycans are attached at residues asparagine 476 and asparagine 517. A helical membrane pass occupies residues 593-613 (FSINLLVCLLLLSCTLSTKSL).

This sequence belongs to the copper type II ascorbate-dependent monooxygenase family. It depends on Cu(2+) as a cofactor. N-glycosylated. Highly expressed in lung, kidney, brain and spinal cord.

The protein localises to the endoplasmic reticulum membrane. In Homo sapiens (Human), this protein is DBH-like monooxygenase protein 1 (MOXD1).